An 872-amino-acid polypeptide reads, in one-letter code: Probably inactive leucine-rich repeat receptor-like protein kinase At5g06940 (872 aa).

The N-terminal stretch at 1-26 is a signal peptide; sequence MATRFKHQFSISLALTFFFFFTKTFS. Over 27–540 the chain is Extracellular; it reads FTENEELGNL…RSNFHKKGGK (514 aa). N-linked (GlcNAc...) asparagine glycans are attached at residues asparagine 55, asparagine 63, and asparagine 86. LRR repeat units lie at residues 79-98, 99-122, 123-146, 147-169, 171-193, 195-217, 219-243, 244-267, 269-292, 294-316, 317-340, 341-365, 367-389, 391-412, 413-435, 436-459, 460-482, and 484-506; these read SINL…ICDL, PYLT…LSRC, VTLE…ISEF, SSLK…DLGL, FNLQ…AIGK, SELV…SFLG, LDKL…FVGL, TSLR…LGPS, KNLV…ICSG, RLIN…IGEC, LSLE…LWKL, PRIK…SLAS, LEQV…GLVK, LYKF…FCDS, PVLS…LKNC, KKLV…LADL, HVLT…GLQN, and KLAL…LVSG. Asparagine 129 is a glycosylation site (N-linked (GlcNAc...) asparagine). N-linked (GlcNAc...) asparagine glycosylation occurs at asparagine 255. Asparagine 297 is a glycosylation site (N-linked (GlcNAc...) asparagine). Residue asparagine 374 is glycosylated (N-linked (GlcNAc...) asparagine). The N-linked (GlcNAc...) asparagine glycan is linked to asparagine 419. N-linked (GlcNAc...) asparagine glycosylation occurs at asparagine 489. Residues 541-561 traverse the membrane as a helical segment; sequence ALVLSLICLALAIATFLAVLY. Topologically, residues 562–872 are cytoplasmic; it reads RYSRKKVQFK…ISSSVSPVSA (311 aa). Threonine 585 carries the post-translational modification Phosphothreonine. One can recognise a Protein kinase domain in the interval 589–863; it reads LMKVVNESCP…VKVIKLLEGI (275 aa). Residues 595–603 and lysine 617 contribute to the ATP site; that span reads ESCPSGSEV. Phosphotyrosine occurs at positions 662, 699, 754, and 761.

The protein belongs to the protein kinase superfamily. Ser/Thr protein kinase family.

Its subcellular location is the membrane. This is Probably inactive leucine-rich repeat receptor-like protein kinase At5g06940 from Arabidopsis thaliana (Mouse-ear cress).